The chain runs to 140 residues: Large ribosomal subunit protein uL16 (140 aa).

It belongs to the universal ribosomal protein uL16 family. Part of the 50S ribosomal subunit.

In terms of biological role, binds 23S rRNA and is also seen to make contacts with the A and possibly P site tRNAs. The polypeptide is Large ribosomal subunit protein uL16 (Syntrophus aciditrophicus (strain SB)).